We begin with the raw amino-acid sequence, 317 residues long: Pinoresinol reductase 2 (317 aa).

The NADP(+) site is built by threonine 18, serine 20, leucine 21, arginine 41, lysine 50, serine 90, glycine 91, arginine 95, asparagine 98, and serine 121. Position 125 (methionine 125) interacts with (-)-pinoresinol. NADP(+)-binding residues include lysine 144 and phenylalanine 166. The Proton acceptor role is filled by lysine 144. Glycine 178 contributes to the (-)-pinoresinol binding site.

Belongs to the NmrA-type oxidoreductase family. Isoflavone reductase subfamily. Forms homodimers. Expressed in roots. Detected in stems.

It carries out the reaction (-)-lariciresinol + NADP(+) = (-)-pinoresinol + NADPH + H(+). In terms of biological role, reductase involved in lignan biosynthesis. Unlike conventional pinoresinol reductases that can reduce both pinoresinol and lariciresinol, PRR2 shows a strict substrate selectivity for (-)-pinoresinol. No activity with (+)-pinoresinol or lariciresinol. Abstracts the 4R-hydride from the NADPH cofactor during catalysis. The protein is Pinoresinol reductase 2 of Arabidopsis thaliana (Mouse-ear cress).